Consider the following 219-residue polypeptide: Trafficking protein particle complex subunit 4 (219 aa).

This sequence belongs to the TRAPP small subunits family. TRAPPC4 subfamily. As to quaternary structure, component of the multisubunit TRAPP (transport protein particle) complex, which includes at least TRAPPC2, TRAPPC2L, TRAPPC3, TRAPPC3L, TRAPPC4, TRAPPC5, TRAPPC8, TRAPPC9, TRAPPC10, TRAPPC11 and TRAPPC12. Interacts with SDC2.

Its subcellular location is the postsynaptic cell membrane. The protein resides in the golgi apparatus membrane. The protein localises to the endoplasmic reticulum. It is found in the vesicle. Its function is as follows. Core component of the TRAPP complexes which has a function of guanine nucleotide exchange factor activity for Rab1 GTPase. Plays a role in vesicular transport from endoplasmic reticulum to Golgi and autophagy. May play a role in dendrite postsynaptic membrane trafficking. This Homo sapiens (Human) protein is Trafficking protein particle complex subunit 4.